The chain runs to 368 residues: Putative alcohol dehydrogenase D (368 aa).

Zn(2+) contacts are provided by cysteine 40, histidine 61, cysteine 91, cysteine 94, cysteine 97, cysteine 105, and cysteine 167.

It belongs to the zinc-containing alcohol dehydrogenase family. It depends on Zn(2+) as a cofactor.

It carries out the reaction a primary alcohol + NAD(+) = an aldehyde + NADH + H(+). The enzyme catalyses a secondary alcohol + NAD(+) = a ketone + NADH + H(+). Its function is as follows. Required for maintaining the appropriate mycolic acid composition and permeability of the envelope on its exposure to acidic pH. This is Putative alcohol dehydrogenase D (adhD) from Mycobacterium tuberculosis (strain CDC 1551 / Oshkosh).